The chain runs to 340 residues: tRNA N6-adenosine threonylcarbamoyltransferase (340 aa).

The Fe cation site is built by histidine 113 and histidine 117. Substrate contacts are provided by residues leucine 135 to glycine 139, aspartate 169, glycine 182, aspartate 186, and asparagine 274. Aspartate 302 is a binding site for Fe cation.

Belongs to the KAE1 / TsaD family. Fe(2+) is required as a cofactor.

It localises to the cytoplasm. It catalyses the reaction L-threonylcarbamoyladenylate + adenosine(37) in tRNA = N(6)-L-threonylcarbamoyladenosine(37) in tRNA + AMP + H(+). In terms of biological role, required for the formation of a threonylcarbamoyl group on adenosine at position 37 (t(6)A37) in tRNAs that read codons beginning with adenine. Is involved in the transfer of the threonylcarbamoyl moiety of threonylcarbamoyl-AMP (TC-AMP) to the N6 group of A37, together with TsaE and TsaB. TsaD likely plays a direct catalytic role in this reaction. This Mycolicibacterium gilvum (strain PYR-GCK) (Mycobacterium gilvum (strain PYR-GCK)) protein is tRNA N6-adenosine threonylcarbamoyltransferase.